Reading from the N-terminus, the 152-residue chain is UPF0336 protein Tfu_2666 (152 aa).

The MaoC-like domain occupies 7–116 (YLGRAYELPE…TTITDIKSLA (110 aa)).

The protein belongs to the UPF0336 family.

The chain is UPF0336 protein Tfu_2666 from Thermobifida fusca (strain YX).